A 576-amino-acid polypeptide reads, in one-letter code: Sulfite reductase [NADPH] hemoprotein beta-component (576 aa).

4 residues coordinate [4Fe-4S] cluster: C439, C445, C485, and C489. C489 contacts siroheme.

It belongs to the nitrite and sulfite reductase 4Fe-4S domain family. In terms of assembly, alpha(8)-beta(8). The alpha component is a flavoprotein, the beta component is a hemoprotein. Requires siroheme as cofactor. It depends on [4Fe-4S] cluster as a cofactor.

The catalysed reaction is hydrogen sulfide + 3 NADP(+) + 3 H2O = sulfite + 3 NADPH + 4 H(+). It functions in the pathway sulfur metabolism; hydrogen sulfide biosynthesis; hydrogen sulfide from sulfite (NADPH route): step 1/1. Functionally, component of the sulfite reductase complex that catalyzes the 6-electron reduction of sulfite to sulfide. This is one of several activities required for the biosynthesis of L-cysteine from sulfate. The protein is Sulfite reductase [NADPH] hemoprotein beta-component of Aliivibrio salmonicida (strain LFI1238) (Vibrio salmonicida (strain LFI1238)).